The sequence spans 440 residues: Trigger factor (440 aa).

Residues 176–261 (GDKVVIDYQN…VKSIYVVKDV (86 aa)) form the PPIase FKBP-type domain.

It belongs to the FKBP-type PPIase family. Tig subfamily.

It is found in the cytoplasm. It carries out the reaction [protein]-peptidylproline (omega=180) = [protein]-peptidylproline (omega=0). Involved in protein export. Acts as a chaperone by maintaining the newly synthesized protein in an open conformation. Functions as a peptidyl-prolyl cis-trans isomerase. The protein is Trigger factor of Ehrlichia canis (strain Jake).